The primary structure comprises 289 residues: Purine nucleoside phosphorylase (289 aa).

Met1 carries the post-translational modification N-acetylmethionine. Phosphate-binding positions include Ser33, His64, and 84-86 (RFH). Tyr88 lines the a purine D-ribonucleoside pocket. Ala116 lines the phosphate pocket. The a purine D-ribonucleoside site is built by Glu201 and Met219. Residue Ser220 coordinates phosphate. The a purine D-ribonucleoside site is built by Asn243 and His257.

It belongs to the PNP/MTAP phosphorylase family. Homotrimer.

The protein resides in the cytoplasm. The catalysed reaction is inosine + phosphate = alpha-D-ribose 1-phosphate + hypoxanthine. It carries out the reaction guanosine + phosphate = alpha-D-ribose 1-phosphate + guanine. The enzyme catalyses 2'-deoxyguanosine + phosphate = 2-deoxy-alpha-D-ribose 1-phosphate + guanine. It catalyses the reaction 2'-deoxyinosine + phosphate = 2-deoxy-alpha-D-ribose 1-phosphate + hypoxanthine. It participates in purine metabolism; purine nucleoside salvage. In terms of biological role, catalyzes the phosphorolytic breakdown of the N-glycosidic bond in the beta-(deoxy)ribonucleoside molecules, with the formation of the corresponding free purine bases and pentose-1-phosphate. Preferentially acts on 6-oxopurine nucleosides including inosine and guanosine. The polypeptide is Purine nucleoside phosphorylase (Pnp) (Mus musculus (Mouse)).